Reading from the N-terminus, the 271-residue chain is MGYVKVVKTSPYFSRYQVKYRRRRQGKTDYRARLRLVRQDKNKYNTHKYRLVVRFSNKNVTCQIVYSTIQGDVVMAAAYSKELPNYGLKVGLTNYSAAYCVGLLVARRILTKLNLADTYKGQEEPDGEDYNVEPVEDGPKPFYCLLDTGLKRTSTGSKVFAAMKGALDGGLDIPHNEKRFVGYADKKLDTEVLQKYIYGGHVAEYQETMQEEEPEKYQAHFSSYVENEIEPDGIEDMYKEVHAKIRENPCPPKKERTKPADAKRWSPQAHL.

Residues 245-264 (IRENPCPPKKERTKPADAKR) are compositionally biased toward basic and acidic residues. Positions 245 to 271 (IRENPCPPKKERTKPADAKRWSPQAHL) are disordered.

The protein belongs to the universal ribosomal protein uL18 family. As to quaternary structure, component of the large ribosomal subunit (LSU).

It is found in the cytoplasm. The protein localises to the nucleus. In terms of biological role, component of the ribosome, a large ribonucleoprotein complex responsible for the synthesis of proteins in the cell. The small ribosomal subunit (SSU) binds messenger RNAs (mRNAs) and translates the encoded message by selecting cognate aminoacyl-transfer RNA (tRNA) molecules. The large subunit (LSU) contains the ribosomal catalytic site termed the peptidyl transferase center (PTC), which catalyzes the formation of peptide bonds, thereby polymerizing the amino acids delivered by tRNAs into a polypeptide chain. The nascent polypeptides leave the ribosome through a tunnel in the LSU and interact with protein factors that function in enzymatic processing, targeting, and the membrane insertion of nascent chains at the exit of the ribosomal tunnel. The polypeptide is Large ribosomal subunit protein uL18 (RPL5) (Dunaliella salina (Green alga)).